A 141-amino-acid chain; its full sequence is Large ribosomal subunit protein uL11 (141 aa).

Belongs to the universal ribosomal protein uL11 family. Part of the ribosomal stalk of the 50S ribosomal subunit. Interacts with L10 and the large rRNA to form the base of the stalk. L10 forms an elongated spine to which L12 dimers bind in a sequential fashion forming a multimeric L10(L12)X complex. Post-translationally, one or more lysine residues are methylated.

Forms part of the ribosomal stalk which helps the ribosome interact with GTP-bound translation factors. The sequence is that of Large ribosomal subunit protein uL11 from Synechococcus elongatus (strain ATCC 33912 / PCC 7942 / FACHB-805) (Anacystis nidulans R2).